The following is a 519-amino-acid chain: Glycogen synthase (519 aa).

The segment at 1–40 (MISAAVEPHVDAFKPDNREPLTPDFATTGKAPGAQRQHNP) is disordered. The span at 8–21 (PHVDAFKPDNREPL) shows a compositional bias: basic and acidic residues. Position 57 (K57) interacts with ADP-alpha-D-glucose.

The protein belongs to the glycosyltransferase 1 family. Bacterial/plant glycogen synthase subfamily.

It carries out the reaction [(1-&gt;4)-alpha-D-glucosyl](n) + ADP-alpha-D-glucose = [(1-&gt;4)-alpha-D-glucosyl](n+1) + ADP + H(+). It functions in the pathway glycan biosynthesis; glycogen biosynthesis. In terms of biological role, synthesizes alpha-1,4-glucan chains using ADP-glucose. This chain is Glycogen synthase, found in Pseudomonas putida (strain ATCC 47054 / DSM 6125 / CFBP 8728 / NCIMB 11950 / KT2440).